The following is a 117-amino-acid chain: Prefoldin subunit beta (117 aa).

Belongs to the prefoldin subunit beta family. As to quaternary structure, heterohexamer of two alpha and four beta subunits.

Its subcellular location is the cytoplasm. In terms of biological role, molecular chaperone capable of stabilizing a range of proteins. Seems to fulfill an ATP-independent, HSP70-like function in archaeal de novo protein folding. The protein is Prefoldin subunit beta of Thermococcus kodakarensis (strain ATCC BAA-918 / JCM 12380 / KOD1) (Pyrococcus kodakaraensis (strain KOD1)).